We begin with the raw amino-acid sequence, 369 residues long: GTPase Obg (369 aa).

Positions 1–159 (MKFVDEVTID…KNLKLELRVL (159 aa)) constitute an Obg domain. Residues 160 to 334 (ADVGLLGMPN…LIHAIYSHVA (175 aa)) form the OBG-type G domain. GTP contacts are provided by residues 166 to 173 (GMPNAGKS), 191 to 195 (FTTLH), 213 to 216 (DIPG), 284 to 287 (NKLD), and 315 to 317 (SAL). Positions 173 and 193 each coordinate Mg(2+). The segment at 339 to 369 (QPEEVPDPRFTTNEDLSEAAPAPDRDDPRFR) is disordered.

The protein belongs to the TRAFAC class OBG-HflX-like GTPase superfamily. OBG GTPase family. As to quaternary structure, monomer. It depends on Mg(2+) as a cofactor.

The protein resides in the cytoplasm. An essential GTPase which binds GTP, GDP and possibly (p)ppGpp with moderate affinity, with high nucleotide exchange rates and a fairly low GTP hydrolysis rate. Plays a role in control of the cell cycle, stress response, ribosome biogenesis and in those bacteria that undergo differentiation, in morphogenesis control. The chain is GTPase Obg from Leptothrix cholodnii (strain ATCC 51168 / LMG 8142 / SP-6) (Leptothrix discophora (strain SP-6)).